Reading from the N-terminus, the 271-residue chain is Phosphonates import ATP-binding protein PhnC 2 (271 aa).

The region spanning 2–245 (LTIDKLTKRF…VARDIYGAGA (244 aa)) is the ABC transporter domain. Residue 34 to 41 (GRSGAGKS) coordinates ATP.

This sequence belongs to the ABC transporter superfamily. Phosphonates importer (TC 3.A.1.9.1) family. The complex is composed of two ATP-binding proteins (PhnC), two transmembrane proteins (PhnE) and a solute-binding protein (PhnD).

The protein resides in the cell inner membrane. The enzyme catalyses phosphonate(out) + ATP + H2O = phosphonate(in) + ADP + phosphate + H(+). Its function is as follows. Part of the ABC transporter complex PhnCDE involved in phosphonates import. Responsible for energy coupling to the transport system. This chain is Phosphonates import ATP-binding protein PhnC 2, found in Roseobacter denitrificans (strain ATCC 33942 / OCh 114) (Erythrobacter sp. (strain OCh 114)).